A 250-amino-acid polypeptide reads, in one-letter code: Putative ABC transporter ATP-binding protein YjkB (250 aa).

The region spanning 13-245 (ISFRSVRKSY…PQHEAAKEFL (233 aa)) is the ABC transporter domain. 49-56 (GPSGSGKS) is a binding site for ATP.

The protein belongs to the ABC transporter superfamily.

The chain is Putative ABC transporter ATP-binding protein YjkB (yjkB) from Bacillus subtilis (strain 168).